Here is a 275-residue protein sequence, read N- to C-terminus: NH(3)-dependent NAD(+) synthetase (275 aa).

Position 46–53 (46–53) interacts with ATP; sequence GISGGQDS. Residue D52 participates in Mg(2+) binding. R140 contacts deamido-NAD(+). T160 is a binding site for ATP. E165 is a Mg(2+) binding site. The deamido-NAD(+) site is built by K173 and D180. K189 and T211 together coordinate ATP. 260–261 is a binding site for deamido-NAD(+); that stretch reads HK.

It belongs to the NAD synthetase family. Homodimer.

It carries out the reaction deamido-NAD(+) + NH4(+) + ATP = AMP + diphosphate + NAD(+) + H(+). Its pathway is cofactor biosynthesis; NAD(+) biosynthesis; NAD(+) from deamido-NAD(+) (ammonia route): step 1/1. Its function is as follows. Catalyzes the ATP-dependent amidation of deamido-NAD to form NAD. Uses ammonia as a nitrogen source. The polypeptide is NH(3)-dependent NAD(+) synthetase (Escherichia coli O127:H6 (strain E2348/69 / EPEC)).